Here is a 214-residue protein sequence, read N- to C-terminus: Small ribosomal subunit protein eS6 (214 aa).

This sequence belongs to the eukaryotic ribosomal protein eS6 family.

In Saccharolobus solfataricus (strain ATCC 35092 / DSM 1617 / JCM 11322 / P2) (Sulfolobus solfataricus), this protein is Small ribosomal subunit protein eS6.